We begin with the raw amino-acid sequence, 499 residues long: Glycerol kinase (499 aa).

Threonine 12 lines the ADP pocket. 3 residues coordinate ATP: threonine 12, threonine 13, and serine 14. Sn-glycerol 3-phosphate is bound at residue threonine 12. An ADP-binding site is contributed by arginine 16. Positions 82, 83, 134, and 243 each coordinate sn-glycerol 3-phosphate. Glycerol is bound by residues arginine 82, glutamate 83, tyrosine 134, aspartate 243, and glutamine 244. ADP-binding residues include threonine 265 and glycine 308. 4 residues coordinate ATP: threonine 265, glycine 308, glutamine 312, and glycine 411. Position 411 (glycine 411) interacts with ADP.

This sequence belongs to the FGGY kinase family.

It carries out the reaction glycerol + ATP = sn-glycerol 3-phosphate + ADP + H(+). The protein operates within polyol metabolism; glycerol degradation via glycerol kinase pathway; sn-glycerol 3-phosphate from glycerol: step 1/1. Its activity is regulated as follows. Inhibited by fructose 1,6-bisphosphate (FBP). Its function is as follows. Key enzyme in the regulation of glycerol uptake and metabolism. Catalyzes the phosphorylation of glycerol to yield sn-glycerol 3-phosphate. The sequence is that of Glycerol kinase from Agrobacterium fabrum (strain C58 / ATCC 33970) (Agrobacterium tumefaciens (strain C58)).